Consider the following 153-residue polypeptide: Methylglyoxal synthase (153 aa).

Positions 3–153 (DQVNRPKGVT…SYLSRDVPGN (151 aa)) constitute an MGS-like domain. Substrate is bound by residues H19, K23, 45-48 (TGTT), and 65-66 (SG). D71 acts as the Proton donor/acceptor in catalysis. H98 is a substrate binding site.

This sequence belongs to the methylglyoxal synthase family.

The catalysed reaction is dihydroxyacetone phosphate = methylglyoxal + phosphate. Its function is as follows. Catalyzes the formation of methylglyoxal from dihydroxyacetone phosphate. This chain is Methylglyoxal synthase, found in Hahella chejuensis (strain KCTC 2396).